Consider the following 338-residue polypeptide: Heat-inducible transcription repressor HrcA (338 aa).

The protein belongs to the HrcA family.

Negative regulator of class I heat shock genes (grpE-dnaK-dnaJ and groELS operons). Prevents heat-shock induction of these operons. This chain is Heat-inducible transcription repressor HrcA, found in Bacillus cereus (strain ATCC 10987 / NRS 248).